Consider the following 343-residue polypeptide: ATP-dependent (S)-NAD(P)H-hydrate dehydratase (343 aa).

A mitochondrion-targeting transit peptide spans 1–42; the sequence is MAVCPYGAAAVVMALLSAAIAFHCSPLLAVLQRALSLHTAHA. The YjeF C-terminal domain occupies 49-340; it reads LFQLVRNIVP…AEVGAAFSKL (292 aa). Lys63 is modified (N6-acetyllysine). Phosphotyrosine is present on Tyr81. (6S)-NADPHX is bound by residues Gly149 and 202–208; that span reads NHVEFSR. Residues 242-246 and 261-270 each bind ATP; these read KGEQD and GSSRRCGGQG. Residue Asp271 coordinates (6S)-NADPHX.

The protein belongs to the NnrD/CARKD family. Mg(2+) serves as cofactor.

It is found in the mitochondrion. The enzyme catalyses (6S)-NADHX + ATP = ADP + phosphate + NADH + H(+). It catalyses the reaction (6S)-NADPHX + ATP = ADP + phosphate + NADPH + H(+). In terms of biological role, catalyzes the dehydration of the S-form of NAD(P)HX at the expense of ATP, which is converted to ADP. Together with NAD(P)HX epimerase, which catalyzes the epimerization of the S- and R-forms, the enzyme allows the repair of both epimers of NAD(P)HX, a damaged form of NAD(P)H that is a result of enzymatic or heat-dependent hydration. The protein is ATP-dependent (S)-NAD(P)H-hydrate dehydratase of Rattus norvegicus (Rat).